The following is a 518-amino-acid chain: Phytoene desaturase (neurosporene-forming) (518 aa).

Residue 14–47 (LVIGSGLGGLAAAMRLGAKGWRVTVIDKLDVPGG) participates in FAD binding.

It belongs to the carotenoid/retinoid oxidoreductase family. It depends on FAD as a cofactor.

The enzyme catalyses 15-cis-phytoene + 3 A = all-trans-neurosporene + 3 AH2. It functions in the pathway carotenoid biosynthesis. In terms of biological role, converts phytoene into all-trans-neurosporene as the major product, via the intermediary of phytofluene and zeta-carotene, by the introduction of three double bonds. This is Phytoene desaturase (neurosporene-forming) (crtI) from Cereibacter sphaeroides (strain ATCC 17023 / DSM 158 / JCM 6121 / CCUG 31486 / LMG 2827 / NBRC 12203 / NCIMB 8253 / ATH 2.4.1.) (Rhodobacter sphaeroides).